The chain runs to 689 residues: 7SK snRNA methylphosphate capping enzyme (689 aa).

At M1 the chain carries N-acetylmethionine. Basic and acidic residues predominate over residues 1–10 (MIEMAAEKEP). The interval 1 to 167 (MIEMAAEKEP…GGGGFKHPAF (167 aa)) is disordered. The segment covering 52-84 (GRCAPSAGSPAAAVGRESPGAAATSSSGPQAQQ) has biased composition (low complexity). Phosphoserine occurs at positions 57, 60, 69, and 101. R117 carries the post-translational modification Omega-N-methylarginine. Residues S152, S175, and S179 each carry the phosphoserine modification. T213 is modified (phosphothreonine). A phosphoserine mark is found at S216, S217, and S254. Residues 258–269 (TGRKRHRHRGQH) are compositionally biased toward basic residues. Residues 258-314 (TGRKRHRHRGQHHQQQQAAGGSESHPVPPTAPLTPLLHGEGASQQPRHRGQNRDAPQ) are disordered. Phosphothreonine is present on T291. Phosphoserine is present on residues S330 and S344. The interval 332–407 (LPSALQGPSG…HHPLPAAGFK (76 aa)) is disordered. Positions 338-359 (GPSGSLSAPPAASVISAPPSSS) are enriched in low complexity. Basic residues predominate over residues 360–369 (SRHRKRRRTS). Residue S390 is modified to Phosphoserine. Residues Y422, R433, 451–453 (GCN), 474–475 (DI), 559–560 (NY), and L581 contribute to the S-adenosyl-L-methionine site. The Bin3-type SAM domain occupies 431–686 (DGRLRVLKPE…PVYLFHKARS (256 aa)). Residue K643 forms a Glycyl lysine isopeptide (Lys-Gly) (interchain with G-Cter in SUMO2) linkage.

This sequence belongs to the methyltransferase superfamily. As to quaternary structure, core component of the 7SK RNP complex, at least composed of 7SK RNA, LARP7, MEPCE, HEXIM1 (or HEXIM2) and P-TEFb (composed of CDK9 and CCNT1/cyclin-T1). Interacts with METTL16. Interacts with RBM7; upon genotoxic stress this interaction is enhanced, triggering the release of inactive P-TEFb complex from the core, yielding to P-TEFb complex activation. Post-translationally, dephosphorylated at Ser-152 by the PNUTS-PP1 complex, promoting RNA polymerase II transcription pause-release. In terms of tissue distribution, expressed in chronic myeloid leukemia cells, adrenal gland, brain, cerebellum, kidney, lung, mammary gland and testis. Weakly or not expressed in other tissues.

It localises to the nucleus. It carries out the reaction a 5'-end triphospho-guanosine-ribonucleotide-snRNA + S-adenosyl-L-methionine = a 5'-end methyltriphosphate-guanosine-ribonucleotide-snRNA + S-adenosyl-L-homocysteine. Functionally, S-adenosyl-L-methionine-dependent methyltransferase that adds a methylphosphate cap at the 5'-end of 7SK snRNA (7SK RNA), leading to stabilize it. Also has a non-enzymatic function as part of the 7SK RNP complex: the 7SK RNP complex sequesters the positive transcription elongation factor b (P-TEFb) in a large inactive 7SK RNP complex preventing RNA polymerase II phosphorylation and subsequent transcriptional elongation. The 7SK RNP complex also promotes snRNA gene transcription by RNA polymerase II via interaction with the little elongation complex (LEC). In the 7SK RNP complex, MEPCE is required to stabilize 7SK RNA and facilitate the assembly of 7SK RNP complex. MEPCE has a non-enzymatic function in the 7SK RNP complex; interaction with LARP7 within the 7SK RNP complex occluding its catalytic center. Also required for stability of U6 snRNAs. The sequence is that of 7SK snRNA methylphosphate capping enzyme from Homo sapiens (Human).